The primary structure comprises 143 residues: uncharacterized protein (143 aa).

Residues 1-38 (MKYWKYLSQLTIRRPLTYNNALLYRNRFPSILTWKRSA) constitute a mitochondrion transit peptide.

Its subcellular location is the mitochondrion. This is an uncharacterized protein from Schizosaccharomyces pombe (strain 972 / ATCC 24843) (Fission yeast).